The chain runs to 176 residues: MSTEEKKIILGKVGAVYGIKGWLKIHSFTDETEAILDYFPWSLKLGNNTQTVEITDWRKHNKVLIVKVAGIDDRDEAQALVGSEILTNEAALPELSEDDFYWRDLIGMSVVTNKGYDLGVVTDMMETGANDVLVVKANLKDGFSKKERLIPYLFEQVIESVSIENKQICVDWDPGF.

Residues 97 to 176 (EDDFYWRDLI…QICVDWDPGF (80 aa)) form the PRC barrel domain.

This sequence belongs to the RimM family. As to quaternary structure, binds ribosomal protein uS19.

It is found in the cytoplasm. In terms of biological role, an accessory protein needed during the final step in the assembly of 30S ribosomal subunit, possibly for assembly of the head region. Essential for efficient processing of 16S rRNA. May be needed both before and after RbfA during the maturation of 16S rRNA. It has affinity for free ribosomal 30S subunits but not for 70S ribosomes. The polypeptide is Ribosome maturation factor RimM (Colwellia psychrerythraea (strain 34H / ATCC BAA-681) (Vibrio psychroerythus)).